Reading from the N-terminus, the 428-residue chain is Serine--tRNA ligase (428 aa).

Residue 235-237 participates in L-serine binding; it reads TAE. 266 to 268 contacts ATP; that stretch reads RSE. Glutamate 289 is a binding site for L-serine. 353 to 356 is an ATP binding site; sequence EISS. Serine 389 is a binding site for L-serine.

It belongs to the class-II aminoacyl-tRNA synthetase family. Type-1 seryl-tRNA synthetase subfamily. Homodimer. The tRNA molecule binds across the dimer.

It is found in the cytoplasm. The enzyme catalyses tRNA(Ser) + L-serine + ATP = L-seryl-tRNA(Ser) + AMP + diphosphate + H(+). It catalyses the reaction tRNA(Sec) + L-serine + ATP = L-seryl-tRNA(Sec) + AMP + diphosphate + H(+). Its pathway is aminoacyl-tRNA biosynthesis; selenocysteinyl-tRNA(Sec) biosynthesis; L-seryl-tRNA(Sec) from L-serine and tRNA(Sec): step 1/1. Its function is as follows. Catalyzes the attachment of serine to tRNA(Ser). Is also able to aminoacylate tRNA(Sec) with serine, to form the misacylated tRNA L-seryl-tRNA(Sec), which will be further converted into selenocysteinyl-tRNA(Sec). This chain is Serine--tRNA ligase, found in Shewanella oneidensis (strain ATCC 700550 / JCM 31522 / CIP 106686 / LMG 19005 / NCIMB 14063 / MR-1).